We begin with the raw amino-acid sequence, 197 residues long: Proteasome subunit beta 1 (197 aa).

A propeptide spans 1–6 (removed in mature form; by autocatalysis); the sequence is MNRKTG. T7 (nucleophile) is an active-site residue.

The protein belongs to the peptidase T1B family. The 20S proteasome core is composed of 14 alpha and 14 beta subunits that assemble into four stacked heptameric rings, resulting in a barrel-shaped structure. The two inner rings, each composed of seven catalytic beta subunits, are sandwiched by two outer rings, each composed of seven alpha subunits. The catalytic chamber with the active sites is on the inside of the barrel. Has a gated structure, the ends of the cylinder being occluded by the N-termini of the alpha-subunits. Is capped at one or both ends by the proteasome regulatory ATPase, PAN.

The protein resides in the cytoplasm. It catalyses the reaction Cleavage of peptide bonds with very broad specificity.. The formation of the proteasomal ATPase PAN-20S proteasome complex, via the docking of the C-termini of PAN into the intersubunit pockets in the alpha-rings, triggers opening of the gate for substrate entry. Interconversion between the open-gate and close-gate conformations leads to a dynamic regulation of the 20S proteasome proteolysis activity. Functionally, component of the proteasome core, a large protease complex with broad specificity involved in protein degradation. In Pyrococcus abyssi (strain GE5 / Orsay), this protein is Proteasome subunit beta 1.